We begin with the raw amino-acid sequence, 257 residues long: Type III pantothenate kinase (257 aa).

Residue 6-13 (DSGNTNTV) coordinates ATP. 108–111 (GADR) is a binding site for substrate. D110 serves as the catalytic Proton acceptor. D130 lines the K(+) pocket. T133 is a binding site for ATP. Residue T185 participates in substrate binding.

Belongs to the type III pantothenate kinase family. In terms of assembly, homodimer. NH4(+) serves as cofactor. The cofactor is K(+).

It localises to the cytoplasm. The enzyme catalyses (R)-pantothenate + ATP = (R)-4'-phosphopantothenate + ADP + H(+). Its pathway is cofactor biosynthesis; coenzyme A biosynthesis; CoA from (R)-pantothenate: step 1/5. Functionally, catalyzes the phosphorylation of pantothenate (Pan), the first step in CoA biosynthesis. The polypeptide is Type III pantothenate kinase (Rhodospirillum rubrum (strain ATCC 11170 / ATH 1.1.1 / DSM 467 / LMG 4362 / NCIMB 8255 / S1)).